The chain runs to 613 residues: Laccase 1 (613 aa).

A signal peptide spans 1 to 20 (MSRFARLLLIVALFFTGAWA). 2 Plastocyanin-like domains span residues 29–142 (ITWK…IRPK) and 171–359 (YLVV…MRIP). Asn74 is a glycosylation site (N-linked (GlcNAc...) asparagine). Residues His78, His80, His122, and His124 each contribute to the Cu cation site. Residues Asn256, Asn279, Asn444, Asn468, and Asn484 are each glycosylated (N-linked (GlcNAc...) asparagine). Residues 468–598 (NATRDTENDG…GGMGIAILDG (131 aa)) form the Plastocyanin-like 3 domain. His506, His509, and His511 together coordinate Cu cation. Asn526 is a glycosylation site (N-linked (GlcNAc...) asparagine). Positions 580, 581, 582, and 586 each coordinate Cu cation.

It belongs to the multicopper oxidase family. Cu cation is required as a cofactor.

The protein resides in the cell surface. The protein operates within pigment biosynthesis. Its function is as follows. Laccase; part of the Pks1 gene cluster that mediates the biosynthesis of an anthraquinone derivative pigment that contributes to conidial pigmentation that provides protection from UV radiation, heat and cold stress. The polyketide synthase Pks1 produces 1-acetyl-2,4,6,8-tetrahydroxy-9,10-anthraquinone though condensation of acetyl-CoA with malonyl-CoA. The dehydratase EthD and the laccase Mlac1 further convert the anthraquinone derivative into the final conidial pigment. The polypeptide is Laccase 1 (Metarhizium guizhouense (strain ARSEF 977)).